The chain runs to 232 residues: Sugar fermentation stimulation protein homolog (232 aa).

The protein belongs to the SfsA family.

This chain is Sugar fermentation stimulation protein homolog, found in Geobacter sulfurreducens (strain ATCC 51573 / DSM 12127 / PCA).